Reading from the N-terminus, the 89-residue chain is Protein RALF-like 5 (89 aa).

The signal sequence occupies residues 1-25 (MLKAQVFMFVTVLVFVCVFINSNDA). Cystine bridges form between C39-C48 and C61-C67.

This sequence belongs to the plant rapid alkalinization factor (RALF) family.

It localises to the secreted. Its function is as follows. Cell signaling peptide that may regulate plant stress, growth, and development. Mediates a rapid alkalinization of extracellular space by mediating a transient increase in the cytoplasmic Ca(2+) concentration leading to a calcium-dependent signaling events through a cell surface receptor and a concomitant activation of some intracellular mitogen-activated protein kinases. This Arabidopsis thaliana (Mouse-ear cress) protein is Protein RALF-like 5 (RALFL5).